We begin with the raw amino-acid sequence, 267 residues long: Hydroxyacylglutathione hydrolase (267 aa).

7 residues coordinate Zn(2+): histidine 55, histidine 57, aspartate 59, histidine 60, histidine 121, aspartate 138, and histidine 176.

This sequence belongs to the metallo-beta-lactamase superfamily. Glyoxalase II family. In terms of assembly, monomer. Requires Zn(2+) as cofactor.

It catalyses the reaction an S-(2-hydroxyacyl)glutathione + H2O = a 2-hydroxy carboxylate + glutathione + H(+). Its pathway is secondary metabolite metabolism; methylglyoxal degradation; (R)-lactate from methylglyoxal: step 2/2. Thiolesterase that catalyzes the hydrolysis of S-D-lactoyl-glutathione to form glutathione and D-lactic acid. The chain is Hydroxyacylglutathione hydrolase from Shewanella oneidensis (strain ATCC 700550 / JCM 31522 / CIP 106686 / LMG 19005 / NCIMB 14063 / MR-1).